The following is a 379-amino-acid chain: Class V chitinase CHIT5b (379 aa).

Positions 1–26 (MANILNLKHLLTLALILLALATKSST) are cleaved as a signal peptide. Residues 34–379 (RVKGIYWLEN…TQASKAWKLV (346 aa)) form the GH18 domain. 3 N-linked (GlcNAc...) asparagine glycosylation sites follow: asparagine 68, asparagine 109, and asparagine 128. The active-site Proton donor is the glutamate 147. Residues asparagine 192, asparagine 227, and asparagine 241 are each glycosylated (N-linked (GlcNAc...) asparagine).

This sequence belongs to the glycosyl hydrolase 18 family. Chitinase class V subfamily.

It carries out the reaction Random endo-hydrolysis of N-acetyl-beta-D-glucosaminide (1-&gt;4)-beta-linkages in chitin and chitodextrins.. Its pathway is glycan degradation; chitin degradation. Its function is as follows. Possesses chitinase activity in vitro toward glycol chitin, carboxymethyl-chitin, colloidal chitin, and the chitin oligosaccharides (N-acetylglucosamine) (GlcNAc)6 and (GlcNAc)5. Hydrolyzes (GlcNAc)6 into (GlcNAc)4 and (GlcNAc)2, or two (GlcNAc)3 molecules. Has the capacity to reduce hyphal growth of the fungus Trichoderma viride in an agar-plate bioassay. This chain is Class V chitinase CHIT5b, found in Medicago truncatula (Barrel medic).